We begin with the raw amino-acid sequence, 239 residues long: tRNA (guanine-N(1)-)-methyltransferase (239 aa).

S-adenosyl-L-methionine contacts are provided by residues Gly-112 and 131–136 (LGDFIL).

The protein belongs to the RNA methyltransferase TrmD family. In terms of assembly, homodimer.

The protein localises to the cytoplasm. The enzyme catalyses guanosine(37) in tRNA + S-adenosyl-L-methionine = N(1)-methylguanosine(37) in tRNA + S-adenosyl-L-homocysteine + H(+). Functionally, specifically methylates guanosine-37 in various tRNAs. The chain is tRNA (guanine-N(1)-)-methyltransferase from Clostridium tetani (strain Massachusetts / E88).